The chain runs to 373 residues: Gibberellin 3-beta-dioxygenase 2 (373 aa).

The Fe2OG dioxygenase domain maps to 203–304; the sequence is MTATVHLNWY…RVSLGYFLGP (102 aa). Tyr-212 contacts 2-oxoglutarate. Fe cation is bound by residues His-227, Asp-229, and His-285. Residues Arg-295 and Ser-297 each coordinate 2-oxoglutarate.

Belongs to the iron/ascorbate-dependent oxidoreductase family. It depends on L-ascorbate as a cofactor. Fe(2+) is required as a cofactor. As to expression, highly expressed in elongating leaves. Expressed in unopened flowers. Expressed at low levels in leaf blades, shoots, rachis, stems and young panicles.

The catalysed reaction is gibberellin A20 + 2-oxoglutarate + O2 = gibberellin A1 + succinate + CO2. It participates in plant hormone biosynthesis; gibberellin biosynthesis. Functionally, catalyzes the 3-beta-hydroxylation of the inactive gibberellin precursors, leading to the formation of bioactive gibberellins. In vitro, converts the precursors GA20, GA5, GA44 and GA9 to the corresponding 3-beta-hydroxylated active products GA1, GA3, GA38 and GA4, respectively. Involved in the production of bioactive GA for vegetative growth and development. Controls the elongation of the vegetative shoot and plant height by the regulation of active gibberellin levels. The chain is Gibberellin 3-beta-dioxygenase 2 from Oryza sativa subsp. japonica (Rice).